Reading from the N-terminus, the 146-residue chain is Snaclec agkisacutacin subunit B (146 aa).

Residues 1-23 (MGRFIFVSFGLLVVFLSLSGTAA) form the signal peptide. The C-type lectin domain maps to 24 to 146 (DCPSDWSSYE…TCSFVCKFQA (123 aa)). 3 disulfides stabilise this stretch: Cys25–Cys36, Cys53–Cys142, and Cys119–Cys134. The Ca(2+) site is built by Ser64 and Glu70.

This sequence belongs to the snaclec family. Heterodimer of subunits A and B; disulfide-linked. In terms of tissue distribution, expressed by the venom gland.

It is found in the secreted. Its function is as follows. Anticoagulant protein which binds to the gamma-carboxyglutamic acid-domain regions of factor IX (F9) and factor X (F10) in the presence of calcium with a 1 to 1 stoichiometry. Also inhibits platelet aggregation by binding to platelet glycoprotein Ibalpha (GP1BA) and functioning as a blocker of von Willebrand factor (VWF). Is devoid of hemorrhagic and lethal activities. Possesses antithrombotic and thrombolytic activities. Also hydrolyzes the Aalpha-chain of fibrinogen (FGA). Does not affect the Bbeta-chain (FGB) and the gamma chain (FGG). The protein is Snaclec agkisacutacin subunit B of Deinagkistrodon acutus (Hundred-pace snake).